We begin with the raw amino-acid sequence, 482 residues long: Proline--tRNA ligase (482 aa).

L-proline is bound by residues Thr117, Glu119, and Arg148. ATP contacts are provided by Arg148, Glu150, Gln232, and Thr235. His237 contributes to the L-proline binding site. ATP is bound at residue Ser269. Residues 346 to 376 (EMRGVPLRVEIGPRDLEKGAAVISRRDTGEK) form an interaction with tRNA region. Zn(2+) is bound by residues Cys436, Cys441, Cys464, and Cys467.

The protein belongs to the class-II aminoacyl-tRNA synthetase family. ProS type 3 subfamily. In terms of assembly, homodimer. The dimer is functionally asymmetric: only one of the two active sites at a time is able to form prolyl-adenylate, and only one tRNA molecule binds per dimer. Interacts with LeuRS, which enhances tRNA(Pro) aminoacylation.

It localises to the cytoplasm. The enzyme catalyses tRNA(Pro) + L-proline + ATP = L-prolyl-tRNA(Pro) + AMP + diphosphate. In terms of biological role, catalyzes the attachment of proline to tRNA(Pro) in a two-step reaction: proline is first activated by ATP to form Pro-AMP and then transferred to the acceptor end of tRNA(Pro). Can inadvertently accommodate and process cysteine. This chain is Proline--tRNA ligase (proS), found in Methanothermobacter thermautotrophicus (strain ATCC 29096 / DSM 1053 / JCM 10044 / NBRC 100330 / Delta H) (Methanobacterium thermoautotrophicum).